The sequence spans 427 residues: Gamma-glutamyl phosphate reductase (427 aa).

It belongs to the gamma-glutamyl phosphate reductase family.

The protein localises to the cytoplasm. It carries out the reaction L-glutamate 5-semialdehyde + phosphate + NADP(+) = L-glutamyl 5-phosphate + NADPH + H(+). It participates in amino-acid biosynthesis; L-proline biosynthesis; L-glutamate 5-semialdehyde from L-glutamate: step 2/2. Functionally, catalyzes the NADPH-dependent reduction of L-glutamate 5-phosphate into L-glutamate 5-semialdehyde and phosphate. The product spontaneously undergoes cyclization to form 1-pyrroline-5-carboxylate. The protein is Gamma-glutamyl phosphate reductase of Rhizobium etli (strain CIAT 652).